A 527-amino-acid chain; its full sequence is Type-2 serine--tRNA ligase (527 aa).

Ala317 contributes to the L-serine binding site. Cys319 lines the Zn(2+) pocket. An L-serine-binding site is contributed by Arg349. ATP is bound by residues 349 to 351 (RWE) and 360 to 361 (RV). Residue 366–368 (RIE) participates in L-serine binding. Zn(2+) is bound by residues Glu368 and Cys478. Arg485 serves as a coordination point for ATP.

It belongs to the class-II aminoacyl-tRNA synthetase family. Type-2 seryl-tRNA synthetase subfamily. Homodimer. Zn(2+) serves as cofactor.

The protein localises to the cytoplasm. The catalysed reaction is tRNA(Ser) + L-serine + ATP = L-seryl-tRNA(Ser) + AMP + diphosphate + H(+). It catalyses the reaction tRNA(Sec) + L-serine + ATP = L-seryl-tRNA(Sec) + AMP + diphosphate + H(+). It functions in the pathway aminoacyl-tRNA biosynthesis; selenocysteinyl-tRNA(Sec) biosynthesis; L-seryl-tRNA(Sec) from L-serine and tRNA(Sec): step 1/1. Its function is as follows. Catalyzes the attachment of serine to tRNA(Ser). Is also able to aminoacylate tRNA(Sec) with serine, to form the misacylated tRNA L-seryl-tRNA(Sec), which will be further converted into selenocysteinyl-tRNA(Sec). This Methanopyrus kandleri (strain AV19 / DSM 6324 / JCM 9639 / NBRC 100938) protein is Type-2 serine--tRNA ligase.